The sequence spans 121 residues: ATP synthase epsilon chain (121 aa).

It belongs to the ATPase epsilon chain family. F-type ATPases have 2 components, CF(1) - the catalytic core - and CF(0) - the membrane proton channel. CF(1) has five subunits: alpha(3), beta(3), gamma(1), delta(1), epsilon(1). CF(0) has three main subunits: a, b and c.

It is found in the cell membrane. Functionally, produces ATP from ADP in the presence of a proton gradient across the membrane. This is ATP synthase epsilon chain from Mycobacterium avium (strain 104).